Reading from the N-terminus, the 332-residue chain is Glycerol-3-phosphate dehydrogenase [NAD(P)+] (332 aa).

NADPH-binding residues include Trp11, Arg30, and Lys108. Residues Lys108, Gly137, and Ser139 each contribute to the sn-glycerol 3-phosphate site. Ala141 is a binding site for NADPH. Residues Lys192, Asp245, Ser255, Arg256, and Asn257 each contribute to the sn-glycerol 3-phosphate site. Lys192 acts as the Proton acceptor in catalysis. NADPH is bound at residue Arg256. Residues Val280 and Glu282 each coordinate NADPH.

The protein belongs to the NAD-dependent glycerol-3-phosphate dehydrogenase family.

It is found in the cytoplasm. The enzyme catalyses sn-glycerol 3-phosphate + NAD(+) = dihydroxyacetone phosphate + NADH + H(+). It carries out the reaction sn-glycerol 3-phosphate + NADP(+) = dihydroxyacetone phosphate + NADPH + H(+). It participates in membrane lipid metabolism; glycerophospholipid metabolism. In terms of biological role, catalyzes the reduction of the glycolytic intermediate dihydroxyacetone phosphate (DHAP) to sn-glycerol 3-phosphate (G3P), the key precursor for phospholipid synthesis. This is Glycerol-3-phosphate dehydrogenase [NAD(P)+] from Burkholderia thailandensis (strain ATCC 700388 / DSM 13276 / CCUG 48851 / CIP 106301 / E264).